The primary structure comprises 492 residues: N-succinylglutamate 5-semialdehyde dehydrogenase (492 aa).

Residue 220–225 participates in NAD(+) binding; the sequence is GSASTG. Active-site residues include Glu-243 and Cys-277.

This sequence belongs to the aldehyde dehydrogenase family. AstD subfamily.

The enzyme catalyses N-succinyl-L-glutamate 5-semialdehyde + NAD(+) + H2O = N-succinyl-L-glutamate + NADH + 2 H(+). Its pathway is amino-acid degradation; L-arginine degradation via AST pathway; L-glutamate and succinate from L-arginine: step 4/5. Functionally, catalyzes the NAD-dependent reduction of succinylglutamate semialdehyde into succinylglutamate. This chain is N-succinylglutamate 5-semialdehyde dehydrogenase, found in Salmonella gallinarum (strain 287/91 / NCTC 13346).